A 62-amino-acid polypeptide reads, in one-letter code: Photosystem II reaction center protein Z (62 aa).

2 helical membrane-spanning segments follow: residues A8–A28 and F41–I61.

It belongs to the PsbZ family. In terms of assembly, PSII is composed of 1 copy each of membrane proteins PsbA, PsbB, PsbC, PsbD, PsbE, PsbF, PsbH, PsbI, PsbJ, PsbK, PsbL, PsbM, PsbT, PsbY, PsbZ, Psb30/Ycf12, at least 3 peripheral proteins of the oxygen-evolving complex and a large number of cofactors. It forms dimeric complexes.

It localises to the plastid. It is found in the chloroplast thylakoid membrane. Functionally, may control the interaction of photosystem II (PSII) cores with the light-harvesting antenna, regulates electron flow through the 2 photosystem reaction centers. PSII is a light-driven water plastoquinone oxidoreductase, using light energy to abstract electrons from H(2)O, generating a proton gradient subsequently used for ATP formation. The protein is Photosystem II reaction center protein Z of Arabidopsis thaliana (Mouse-ear cress).